We begin with the raw amino-acid sequence, 411 residues long: Serpin A3-5 (411 aa).

The first 24 residues, 1 to 24 (MRAERTSFLLALGLLMAGIRSVHC), serve as a signal peptide directing secretion. 5 N-linked (GlcNAc...) asparagine glycosylation sites follow: Asn100, Asn180, Asn230, Asn264, and Asn318.

Belongs to the serpin family. In terms of assembly, homodimer.

It localises to the cytoplasmic vesicle. The protein localises to the secretory vesicle. Its subcellular location is the chromaffin granule. The protein resides in the secreted. Serine protease inhibitor. The polypeptide is Serpin A3-5 (Bos taurus (Bovine)).